The chain runs to 757 residues: Endonuclease MutS2 (757 aa).

Residue 321 to 328 participates in ATP binding; that stretch reads GPNMGGKT. Residues 681–756 enclose the Smr domain; the sequence is IDIRGMTVEE…GTGVTVVEVK (76 aa).

This sequence belongs to the DNA mismatch repair MutS family. MutS2 subfamily. As to quaternary structure, homodimer. Binds to stalled ribosomes, contacting rRNA.

Its function is as follows. Endonuclease that is involved in the suppression of homologous recombination and thus may have a key role in the control of bacterial genetic diversity. In terms of biological role, acts as a ribosome collision sensor, splitting the ribosome into its 2 subunits. Detects stalled/collided 70S ribosomes which it binds and splits by an ATP-hydrolysis driven conformational change. Acts upstream of the ribosome quality control system (RQC), a ribosome-associated complex that mediates the extraction of incompletely synthesized nascent chains from stalled ribosomes and their subsequent degradation. Probably generates substrates for RQC. This is Endonuclease MutS2 from Thermotoga petrophila (strain ATCC BAA-488 / DSM 13995 / JCM 10881 / RKU-1).